Here is a 326-residue protein sequence, read N- to C-terminus: Eukaryotic translation initiation factor 3 subunit I (326 aa).

WD repeat units lie at residues 8-47, 50-89, 145-184, 188-227, and 285-326; these read GHERSITQIKYNREGDLLFSCSKDQKPNVWYSLNGERLGT, GHQGAVWCLDVDWESRKLITGAGDMTAKIWDVEYGTVIAS, MTESKITSMLWGPLDETIITGHDNGNIAIWDIRKGQKVVD, DHSAGINDMQLSKDGTMFVTASRDTTAKLFDSESLMCLKT, and GHFG…NIFE.

Belongs to the eIF-3 subunit I family. In terms of assembly, component of the eukaryotic translation initiation factor 3 (eIF-3) complex. The eIF-3 complex interacts with pix.

Its subcellular location is the cytoplasm. Component of the eukaryotic translation initiation factor 3 (eIF-3) complex, which is involved in protein synthesis of a specialized repertoire of mRNAs and, together with other initiation factors, stimulates binding of mRNA and methionyl-tRNAi to the 40S ribosome. The eIF-3 complex specifically targets and initiates translation of a subset of mRNAs involved in cell proliferation. The polypeptide is Eukaryotic translation initiation factor 3 subunit I (Drosophila simulans (Fruit fly)).